The sequence spans 260 residues: Methylphosphonate hydroxylase (260 aa).

Residue Lys-107 coordinates 2-oxoglutarate. Fe cation is bound by residues His-117, Asp-119, and His-195.

The protein belongs to the PhyH family. Fe(2+) is required as a cofactor.

The enzyme catalyses methylphosphonate + 2-oxoglutarate + O2 = hydroxymethylphosphonate + succinate + CO2. Its function is as follows. Part of an oxidative pathway for utilization of methylphosphonic acid as a phosphate source. Catalyzes the conversion of methylphosphonic acid to hydroxymethylphosphonic acid. Is specific for the hydroxylation of methylphosphonate. This Gimesia maris (strain ATCC 29201 / DSM 8797 / 534-30) (Planctomyces maris) protein is Methylphosphonate hydroxylase.